Consider the following 129-residue polypeptide: Phosphoribosyl-AMP cyclohydrolase (129 aa).

Position 77 (Asp-77) interacts with Mg(2+). Cys-78 is a binding site for Zn(2+). Mg(2+)-binding residues include Asp-79 and Asp-81. Zn(2+) contacts are provided by Cys-94 and Cys-101.

It belongs to the PRA-CH family. Homodimer. Mg(2+) is required as a cofactor. Requires Zn(2+) as cofactor.

Its subcellular location is the cytoplasm. It carries out the reaction 1-(5-phospho-beta-D-ribosyl)-5'-AMP + H2O = 1-(5-phospho-beta-D-ribosyl)-5-[(5-phospho-beta-D-ribosylamino)methylideneamino]imidazole-4-carboxamide. It participates in amino-acid biosynthesis; L-histidine biosynthesis; L-histidine from 5-phospho-alpha-D-ribose 1-diphosphate: step 3/9. Its function is as follows. Catalyzes the hydrolysis of the adenine ring of phosphoribosyl-AMP. This chain is Phosphoribosyl-AMP cyclohydrolase, found in Methanosphaera stadtmanae (strain ATCC 43021 / DSM 3091 / JCM 11832 / MCB-3).